The following is a 280-amino-acid chain: MMPLGLFPLPRAAAVLLISLLTLPAQAAERVISLSPSTTELAYAAGLGDKLVAVSAYSDYPESAKKLEHVASWQGINVERILALKPDLILAWRGGNPQRPLDQLAALGIPIFYSDPTHIDQIASDLDKLAQYSPHPEQAHQAAEQFRQHVNTLRDRYARSQPKRTFLQFGTQPLFTSSGHTLQSEVVSLCGGENIFADSRVPWPQVSREQVMTRKPQVIVVSGTQSQVDNVSAFWLPQLVVPVIALNEDWFNRASPRILLAAQQLCQQMASIPTPVAESH.

Positions 1-27 (MMPLGLFPLPRAAAVLLISLLTLPAQA) are cleaved as a signal peptide. One can recognise a Fe/B12 periplasmic-binding domain in the interval 30–277 (RVISLSPSTT…QMASIPTPVA (248 aa)). Tyr57 lines the cyanocob(III)alamin pocket. Cys190 and Cys266 are oxidised to a cystine.

Belongs to the BtuF family. In terms of assembly, the complex is composed of two ATP-binding proteins (BtuD), two transmembrane proteins (BtuC) and a solute-binding protein (BtuF).

The protein resides in the periplasm. In terms of biological role, part of the ABC transporter complex BtuCDF involved in vitamin B12 import. Binds vitamin B12 and delivers it to the periplasmic surface of BtuC. The chain is Vitamin B12-binding protein from Yersinia pestis bv. Antiqua (strain Antiqua).